The sequence spans 385 residues: Zinc finger protein B385R (385 aa).

2 C2H2-type zinc fingers span residues 166-190 (LQCPNCGCIQELMGTIFDETHFYNH) and 168-190 (CPNCGCIQELMGTIFDETHFYNH).

This sequence belongs to the asfivirus B385R family.

The sequence is that of Zinc finger protein B385R from African swine fever virus (isolate Tick/Malawi/Lil 20-1/1983) (ASFV).